The primary structure comprises 149 residues: MTDKSKKSKKLKTQYGSVRYSNFINKAIQLYGCQYTYGEYINMTTRMMIICNQCRDVMYETPKNHLHQKAICQKCHKIPDKPKKYLINTKQKYLEQFAKIYGEKFDFSQFDYQGYYEDAEIICNNCKQKQTFTIRKLLNGTKCSFCAER.

This is an uncharacterized protein from Acanthamoeba polyphaga mimivirus (APMV).